Consider the following 273-residue polypeptide: 2,3,4,5-tetrahydropyridine-2,6-dicarboxylate N-succinyltransferase (273 aa).

Residues R104 and D141 each contribute to the substrate site.

The protein belongs to the transferase hexapeptide repeat family. As to quaternary structure, homotrimer.

The protein localises to the cytoplasm. The catalysed reaction is (S)-2,3,4,5-tetrahydrodipicolinate + succinyl-CoA + H2O = (S)-2-succinylamino-6-oxoheptanedioate + CoA. It participates in amino-acid biosynthesis; L-lysine biosynthesis via DAP pathway; LL-2,6-diaminopimelate from (S)-tetrahydrodipicolinate (succinylase route): step 1/3. This Neisseria gonorrhoeae (strain ATCC 700825 / FA 1090) protein is 2,3,4,5-tetrahydropyridine-2,6-dicarboxylate N-succinyltransferase.